Reading from the N-terminus, the 144-residue chain is Large ribosomal subunit protein uL11 (144 aa).

Belongs to the universal ribosomal protein uL11 family. Part of the ribosomal stalk of the 50S ribosomal subunit. Interacts with L10 and the large rRNA to form the base of the stalk. L10 forms an elongated spine to which L12 dimers bind in a sequential fashion forming a multimeric L10(L12)X complex. Post-translationally, one or more lysine residues are methylated.

Functionally, forms part of the ribosomal stalk which helps the ribosome interact with GTP-bound translation factors. The sequence is that of Large ribosomal subunit protein uL11 from Rickettsia bellii (strain OSU 85-389).